An 82-amino-acid chain; its full sequence is Translation initiation factor IF-1, chloroplastic (82 aa).

The region spanning M1–R72 is the S1-like domain.

The protein belongs to the IF-1 family. In terms of assembly, component of the 30S ribosomal translation pre-initiation complex which assembles on the 30S ribosome in the order IF-2 and IF-3, IF-1 and N-formylmethionyl-tRNA(fMet); mRNA recruitment can occur at any time during PIC assembly.

It localises to the plastid. The protein resides in the chloroplast. Functionally, one of the essential components for the initiation of protein synthesis. Stabilizes the binding of IF-2 and IF-3 on the 30S subunit to which N-formylmethionyl-tRNA(fMet) subsequently binds. Helps modulate mRNA selection, yielding the 30S pre-initiation complex (PIC). Upon addition of the 50S ribosomal subunit IF-1, IF-2 and IF-3 are released leaving the mature 70S translation initiation complex. This is Translation initiation factor IF-1, chloroplastic from Cycas taitungensis (Prince sago).